The chain runs to 392 residues: Na(+)/H(+) antiporter NhaA 2 (392 aa).

The next 11 helical transmembrane spans lie at 20-40 (FFAA…AALI), 61-81 (LSVS…LVGL), 99-119 (ALPG…YVAF), 127-147 (IGGW…VLSL), 158-178 (IFLS…IALF), 181-201 (SDLS…LVAL), 209-229 (LLPY…SGIH), 265-285 (VAFA…LSGI), 298-318 (VALG…ALAI), 336-356 (GVAA…ALAF), and 365-385 (EVKV…VVVL).

The protein belongs to the NhaA Na(+)/H(+) (TC 2.A.33) antiporter family.

The protein resides in the cell inner membrane. It carries out the reaction Na(+)(in) + 2 H(+)(out) = Na(+)(out) + 2 H(+)(in). Its function is as follows. Na(+)/H(+) antiporter that extrudes sodium in exchange for external protons. In Pseudomonas syringae pv. syringae (strain B728a), this protein is Na(+)/H(+) antiporter NhaA 2.